A 237-amino-acid polypeptide reads, in one-letter code: DNA repair protein RecO (237 aa).

This sequence belongs to the RecO family.

Functionally, involved in DNA repair and RecF pathway recombination. This is DNA repair protein RecO from Rickettsia felis (strain ATCC VR-1525 / URRWXCal2) (Rickettsia azadi).